Here is a 925-residue protein sequence, read N- to C-terminus: Leucine--tRNA ligase (925 aa).

A 'HIGH' region motif is present at residues 40–51 (PYPSGAGLHVGH). A 'KMSKS' region motif is present at residues 700-704 (KMSKS). Lys703 serves as a coordination point for ATP.

This sequence belongs to the class-I aminoacyl-tRNA synthetase family.

It localises to the cytoplasm. It carries out the reaction tRNA(Leu) + L-leucine + ATP = L-leucyl-tRNA(Leu) + AMP + diphosphate. The sequence is that of Leucine--tRNA ligase from Porphyromonas gingivalis (strain ATCC 33277 / DSM 20709 / CIP 103683 / JCM 12257 / NCTC 11834 / 2561).